The primary structure comprises 225 residues: VAAAIACALFNLKCKIYMGYKDIKRQSPNVFRMKLMGAEVISVENGSGTLKDACNEALRDWSRNYQKSHYMIGTAAGPHPYPTIVKEFQKMIGEEAKKQILEQENRLPDAIIACVGGGSNAIGIFSDFIDEKVNLIGVEPAGKGIETGKHGAPLTHGRTGIYFGMKSHLMQSQEGQIEKSWSVSAGLDFPSVGPEHSWLNSINRAKYVSVTDIEALEAFQILSKK.

The protein belongs to the TrpB family. In terms of assembly, tetramer of two alpha and two beta chains. Requires pyridoxal 5'-phosphate as cofactor.

The catalysed reaction is (1S,2R)-1-C-(indol-3-yl)glycerol 3-phosphate + L-serine = D-glyceraldehyde 3-phosphate + L-tryptophan + H2O. It functions in the pathway amino-acid biosynthesis; L-tryptophan biosynthesis; L-tryptophan from chorismate: step 5/5. The beta subunit is responsible for the synthesis of L-tryptophan from indole and L-serine. The protein is Tryptophan synthase beta chain (trpB) of Buchnera aphidicola subsp. Rhopalosiphum padi.